The sequence spans 380 residues: Apelin receptor (380 aa).

At 1–30 the chain is on the extracellular side; that stretch reads MEEGGDFDNYYGADNQSECEYTDWKSSGAL. N15 carries N-linked (GlcNAc...) asparagine glycosylation. Cystine bridges form between C19-C281 and C102-C181. The helical transmembrane segment at 31–54 threads the bilayer; sequence IPAIYMLVFLLGTTGNGLVLWTVF. Residues 55–64 lie on the Cytoplasmic side of the membrane; the sequence is RSSREKRRSA. A helical membrane pass occupies residues 65-86; it reads DIFIASLAVADLTFVVTLPLWA. Over 87 to 99 the chain is Extracellular; it reads TYTYRDYDWPFGT. Residues 100–125 form a helical membrane-spanning segment; sequence FFCKLSSYLIFVNMYASVFCLTGLSF. The Cytoplasmic portion of the chain corresponds to 126–146; it reads DRYLAIVRPVANARLRLRVSG. Residues 147–164 form a helical membrane-spanning segment; the sequence is AVATAVLWVLAALLAMPV. The Extracellular portion of the chain corresponds to 165-198; that stretch reads MVLRTTGDLENTTKVQCYMDYSMVATVSSEWAWE. The N-linked (GlcNAc...) asparagine glycan is linked to N175. A helical membrane pass occupies residues 199-223; it reads VGLGVSSTTVGFVVPFTIMLTCYFF. Over 224-246 the chain is Cytoplasmic; sequence IAQTIAGHFRKERIEGLRKRRRL. A helical membrane pass occupies residues 247-270; that stretch reads LSIIVVLVVTFALCWMPYHLVKTL. Over 271–289 the chain is Extracellular; that stretch reads YMLGSLLHWPCDFDLFLMN. A helical transmembrane segment spans residues 290-312; sequence IFPYCTCISYVNSCLNPFLYAFF. Over 313–380 the chain is Cytoplasmic; sequence DPRFRQACTS…PYSQETLVVD (68 aa). Residues 342–351 show a composition bias toward low complexity; the sequence is KSASYSSGHS. The segment at 342–380 is disordered; that stretch reads KSASYSSGHSQGPGPNMGKGGEQMHEKSIPYSQETLVVD. Polar residues predominate over residues 371 to 380; the sequence is PYSQETLVVD.

The protein belongs to the G-protein coupled receptor 1 family. As to quaternary structure, homodimer; dimerization inhibits APLNR-mediated G protein and beta-arrestin signaling pathways compared to monomeric APLNR. As to expression, expressed in heart, brain, kidney, stomach, spleen, thymus, lung, ovary, small intestine and colon, adipose tissues and pancreas. Expressed in glial cells, astrocytes and neuronal subpopulations. Expressed in embryonic (ESCs) and induced (iPSCs) pluripotent stem cells.

The protein resides in the cell membrane. Functionally, g protein-coupled receptor for peptide hormones apelin (APLN) and apelin receptor early endogenous ligand (APELA/ELA), that plays a role in the regulation of normal cardiovascular function and fluid homeostasis. When acting as apelin receptor, activates both G(i) protein pathway that inhibits adenylate cyclase activity, and the beta-arrestin pathway that promotes internalization of the receptor. APLNR/APJ also functions as mechanoreceptor that is activated by pathological stimuli in a G-protein-independent fashion to induce beta-arrestin signaling, hence eliciting cardiac hypertrophy. However, the presence of apelin ligand blunts cardiac hypertrophic induction from APLNR/APJ on response to pathological stimuli. Plays a key role in early development such as gastrulation, blood vessels formation and heart morphogenesis by acting as a APELA receptor. May promote angioblast migration toward the embryonic midline, i.e. the position of the future vessel formation, during vasculogenesis. Promotes sinus venosus (SV)-derived endothelial cells migration into the developing heart to promote coronary blood vessel development. Also plays a role in various processes in adults such as regulation of blood vessel formation, blood pressure, heart contractility and heart failure. (Microbial infection) Alternative coreceptor with CD4 for HIV-1 infection; may be involved in the development of AIDS dementia. The chain is Apelin receptor from Homo sapiens (Human).